The primary structure comprises 110 residues: MKSVFVESTIFEKYRDEYLSDEEYRLFQAELMLNPKLGDVIQGTGGLRKIRVASKGKGKRGGSRIIYYFLDEKRRFYLLTIYGKNEMSDLNANQRKQLMAFMEAWRNEQS.

Toxic component of a type II toxin-antitoxin (TA) system. Inhibits translation by cleavage of mRNA. The polypeptide is Toxin HigB-2 (higB-2) (Vibrio cholerae serotype O1 (strain ATCC 39315 / El Tor Inaba N16961)).